Reading from the N-terminus, the 369-residue chain is tRNA-specific 2-thiouridylase MnmA (369 aa).

ATP contacts are provided by residues 12–19 (GMSGGVDS) and Met38. Residues 98-100 (NPD) are interaction with target base in tRNA. The Nucleophile role is filled by Cys103. The cysteines at positions 103 and 200 are disulfide-linked. Residue Gly128 coordinates ATP. Residues 150-152 (KDQ) are interaction with tRNA. Cys200 (cysteine persulfide intermediate) is an active-site residue. Residues 312 to 313 (RY) are interaction with tRNA.

Belongs to the MnmA/TRMU family.

It is found in the cytoplasm. It carries out the reaction S-sulfanyl-L-cysteinyl-[protein] + uridine(34) in tRNA + AH2 + ATP = 2-thiouridine(34) in tRNA + L-cysteinyl-[protein] + A + AMP + diphosphate + H(+). Its function is as follows. Catalyzes the 2-thiolation of uridine at the wobble position (U34) of tRNA, leading to the formation of s(2)U34. The sequence is that of tRNA-specific 2-thiouridylase MnmA from Tolumonas auensis (strain DSM 9187 / NBRC 110442 / TA 4).